Here is a 321-residue protein sequence, read N- to C-terminus: Hex-5-enoyl-[acyl-carrier protein] acetylenase (321 aa).

Transmembrane regions (helical) follow at residues 36-56 and 62-82; these read FLLY…LLWW and VEIG…SVGL. The Histidine box-1 signature appears at 83-88; the sequence is HRYFAH. A helical membrane pass occupies residues 99–119; that stretch reads VILAILGCMGAQGPVVSWVAV. Positions 120–124 match the Histidine box-2 motif; that stretch reads HRRHH. Residues 188-208 traverse the membrane as a helical segment; the sequence is YVVWIVLGLLIPTILGGIIHG. A Histidine box-3 motif is present at residues 269–273; the sequence is QNNHH.

It belongs to the fatty acid desaturase type 2 family. Requires Fe(2+) as cofactor.

It localises to the membrane. It carries out the reaction 5-hexenoyl-[ACP] + 2 reduced [2Fe-2S]-[ferredoxin] + O2 + 2 H(+) = 5-hexynoyl-[ACP] + 2 oxidized [2Fe-2S]-[ferredoxin] + 2 H2O. The enzyme catalyses hexanoyl-[ACP] + 2 reduced [2Fe-2S]-[ferredoxin] + O2 + 2 H(+) = 5-hexenoyl-[ACP] + 2 oxidized [2Fe-2S]-[ferredoxin] + 2 H2O. Desaturase involved in the biosynthesis of jamaicamides, which show sodium channel blocking activity and fish toxicity. Catalyzes the conversion of 5-hexenoyl loaded onto the acyl carrier protein JamC (5-hexenoyl-JamC) to 5-hexynoyl-JamC. Can also catalyze the conversion of hexanoyl-JamC to 5-hexenoyl-JamC, but it cannot use free 5-hexenoic acid, 5-hexenoyl-CoA, 2-hexenoyl-JamC, 3-hexenoyl-JamC or 4-hexenoyl-JamC. Is specific for C(6) chains, and cannot use 4-pentenoyl-JamC, 6-heptenoyl-JamC or 7-octenoyl-JamC as substrate. The sequence is that of Hex-5-enoyl-[acyl-carrier protein] acetylenase from Moorena producens (strain JHB).